Reading from the N-terminus, the 388-residue chain is Chorismate synthase (388 aa).

2 residues coordinate NADP(+): R39 and R45. Residues 130-132 (RSS), 251-252 (NA), G296, 311-315 (KPIPT), and R337 contribute to the FMN site.

The protein belongs to the chorismate synthase family. In terms of assembly, homotetramer. FMNH2 is required as a cofactor.

The enzyme catalyses 5-O-(1-carboxyvinyl)-3-phosphoshikimate = chorismate + phosphate. It participates in metabolic intermediate biosynthesis; chorismate biosynthesis; chorismate from D-erythrose 4-phosphate and phosphoenolpyruvate: step 7/7. Functionally, catalyzes the anti-1,4-elimination of the C-3 phosphate and the C-6 proR hydrogen from 5-enolpyruvylshikimate-3-phosphate (EPSP) to yield chorismate, which is the branch point compound that serves as the starting substrate for the three terminal pathways of aromatic amino acid biosynthesis. This reaction introduces a second double bond into the aromatic ring system. The polypeptide is Chorismate synthase (Streptococcus uberis (strain ATCC BAA-854 / 0140J)).